We begin with the raw amino-acid sequence, 291 residues long: ATP synthase gamma chain (291 aa).

Belongs to the ATPase gamma chain family. As to quaternary structure, F-type ATPases have 2 components, CF(1) - the catalytic core - and CF(0) - the membrane proton channel. CF(1) has five subunits: alpha(3), beta(3), gamma(1), delta(1), epsilon(1). CF(0) has three main subunits: a, b and c.

The protein localises to the cell inner membrane. Its function is as follows. Produces ATP from ADP in the presence of a proton gradient across the membrane. The gamma chain is believed to be important in regulating ATPase activity and the flow of protons through the CF(0) complex. This is ATP synthase gamma chain from Rhodopseudomonas palustris (strain HaA2).